The chain runs to 372 residues: UDP-N-acetylglucosamine--N-acetylmuramyl-(pentapeptide) pyrophosphoryl-undecaprenol N-acetylglucosamine transferase (372 aa).

Residues Thr-14–Gly-16, Asn-128, Arg-169, Ser-201, Ile-257, and Gln-302 contribute to the UDP-N-acetyl-alpha-D-glucosamine site.

It belongs to the glycosyltransferase 28 family. MurG subfamily.

It is found in the cell inner membrane. It catalyses the reaction di-trans,octa-cis-undecaprenyl diphospho-N-acetyl-alpha-D-muramoyl-L-alanyl-D-glutamyl-meso-2,6-diaminopimeloyl-D-alanyl-D-alanine + UDP-N-acetyl-alpha-D-glucosamine = di-trans,octa-cis-undecaprenyl diphospho-[N-acetyl-alpha-D-glucosaminyl-(1-&gt;4)]-N-acetyl-alpha-D-muramoyl-L-alanyl-D-glutamyl-meso-2,6-diaminopimeloyl-D-alanyl-D-alanine + UDP + H(+). The protein operates within cell wall biogenesis; peptidoglycan biosynthesis. Its function is as follows. Cell wall formation. Catalyzes the transfer of a GlcNAc subunit on undecaprenyl-pyrophosphoryl-MurNAc-pentapeptide (lipid intermediate I) to form undecaprenyl-pyrophosphoryl-MurNAc-(pentapeptide)GlcNAc (lipid intermediate II). This Bacteroides thetaiotaomicron (strain ATCC 29148 / DSM 2079 / JCM 5827 / CCUG 10774 / NCTC 10582 / VPI-5482 / E50) protein is UDP-N-acetylglucosamine--N-acetylmuramyl-(pentapeptide) pyrophosphoryl-undecaprenol N-acetylglucosamine transferase.